The chain runs to 126 residues: Large ribosomal subunit protein uL22 (126 aa).

Belongs to the universal ribosomal protein uL22 family. Part of the 50S ribosomal subunit.

In terms of biological role, this protein binds specifically to 23S rRNA; its binding is stimulated by other ribosomal proteins, e.g. L4, L17, and L20. It is important during the early stages of 50S assembly. It makes multiple contacts with different domains of the 23S rRNA in the assembled 50S subunit and ribosome. Its function is as follows. The globular domain of the protein is located near the polypeptide exit tunnel on the outside of the subunit, while an extended beta-hairpin is found that lines the wall of the exit tunnel in the center of the 70S ribosome. The polypeptide is Large ribosomal subunit protein uL22 (Sphingopyxis alaskensis (strain DSM 13593 / LMG 18877 / RB2256) (Sphingomonas alaskensis)).